A 103-amino-acid chain; its full sequence is MKTLLLTLVVVTIVCLDLGYTRTCFITPDVKSKPCPPGQEVCYTKTWCDGFCGIRGKRVDLGCAATCPTPKKTGIDIICCSTDDCNTFPLRPRGRLSSIKDHP.

The signal sequence occupies residues 1 to 21 (MKTLLLTLVVVTIVCLDLGYT). Cystine bridges form between cysteine 24/cysteine 42, cysteine 35/cysteine 63, cysteine 48/cysteine 52, cysteine 67/cysteine 79, and cysteine 80/cysteine 85.

It belongs to the three-finger toxin family. Long-chain subfamily. Type II alpha-neurotoxin sub-subfamily. In terms of tissue distribution, expressed by the venom gland.

The protein resides in the secreted. Functionally, binds with high affinity to muscular (alpha-1/CHRNA1) and neuronal (alpha-7/CHRNA7) nicotinic acetylcholine receptor (nAChR) and inhibits acetylcholine from binding to the receptor, thereby impairing neuromuscular and neuronal transmission. The protein is Pseudonajatoxin b homolog of Pseudonaja textilis (Eastern brown snake).